We begin with the raw amino-acid sequence, 167 residues long: UPF0336 protein MAP_4109 (167 aa).

The 104-residue stretch at 21-124 folds into the MaoC-like domain; sequence GREQLRQFAL…RFGADIVVTK (104 aa).

This sequence belongs to the UPF0336 family.

The protein is UPF0336 protein MAP_4109 of Mycolicibacterium paratuberculosis (strain ATCC BAA-968 / K-10) (Mycobacterium paratuberculosis).